The chain runs to 199 residues: Adenylyl-sulfate kinase (199 aa).

Residues 1-21 (MSQSSNITWHDSEVTKSDRQQ) are disordered. The segment covering 10 to 19 (HDSEVTKSDR) has biased composition (basic and acidic residues). 34 to 41 (GLSGSGKS) lines the ATP pocket. The Phosphoserine intermediate role is filled by S108.

It belongs to the APS kinase family.

The catalysed reaction is adenosine 5'-phosphosulfate + ATP = 3'-phosphoadenylyl sulfate + ADP + H(+). It participates in sulfur metabolism; hydrogen sulfide biosynthesis; sulfite from sulfate: step 2/3. Functionally, catalyzes the synthesis of activated sulfate. In Staphylococcus haemolyticus (strain JCSC1435), this protein is Adenylyl-sulfate kinase.